The primary structure comprises 230 residues: Cytidylate kinase (230 aa).

16–24 contributes to the ATP binding site; the sequence is GPASAGKST.

This sequence belongs to the cytidylate kinase family. Type 1 subfamily.

It is found in the cytoplasm. It carries out the reaction CMP + ATP = CDP + ADP. It catalyses the reaction dCMP + ATP = dCDP + ADP. In Lactobacillus gasseri (strain ATCC 33323 / DSM 20243 / BCRC 14619 / CIP 102991 / JCM 1131 / KCTC 3163 / NCIMB 11718 / NCTC 13722 / AM63), this protein is Cytidylate kinase.